The chain runs to 191 residues: MDSNDSEFGIGDWQRLLRSLGEDPSRQGLRETPERVTRAWAHWTRGYKQDPAAILKTFADGGESYDELIVVRQIPVYSHCEHHLAPFFGHATIGYLPTGHIVGLSKLTRLVNCFAARLQVQERLTQQVAQSLLEHLQPKAVGVILRCRHMCMESRGIAVAGEETVTSAMLGDLKTNAAQRAEFLALAESHE.

Zn(2+) contacts are provided by C80, H83, and C151.

It belongs to the GTP cyclohydrolase I family. In terms of assembly, toroid-shaped homodecamer, composed of two pentamers of five dimers.

The enzyme catalyses GTP + H2O = 7,8-dihydroneopterin 3'-triphosphate + formate + H(+). It participates in cofactor biosynthesis; 7,8-dihydroneopterin triphosphate biosynthesis; 7,8-dihydroneopterin triphosphate from GTP: step 1/1. This is GTP cyclohydrolase 1 from Nitrosospira multiformis (strain ATCC 25196 / NCIMB 11849 / C 71).